Consider the following 505-residue polypeptide: Cysteine--tRNA ligase (505 aa).

Zn(2+) is bound at residue Cys33. The 'HIGH' region signature appears at 35 to 45 (PTVYDFAHIGN). Zn(2+) contacts are provided by Cys229, His268, and Glu272. Positions 301-305 (KMSKS) match the 'KMSKS' region motif. Position 304 (Lys304) interacts with ATP.

The protein belongs to the class-I aminoacyl-tRNA synthetase family. As to quaternary structure, monomer. Zn(2+) serves as cofactor.

The protein resides in the cytoplasm. The enzyme catalyses tRNA(Cys) + L-cysteine + ATP = L-cysteinyl-tRNA(Cys) + AMP + diphosphate. This Brucella anthropi (strain ATCC 49188 / DSM 6882 / CCUG 24695 / JCM 21032 / LMG 3331 / NBRC 15819 / NCTC 12168 / Alc 37) (Ochrobactrum anthropi) protein is Cysteine--tRNA ligase.